A 152-amino-acid chain; its full sequence is Protein-export protein SecB (152 aa).

This sequence belongs to the SecB family. In terms of assembly, homotetramer, a dimer of dimers. One homotetramer interacts with 1 SecA dimer.

It is found in the cytoplasm. Functionally, one of the proteins required for the normal export of preproteins out of the cell cytoplasm. It is a molecular chaperone that binds to a subset of precursor proteins, maintaining them in a translocation-competent state. It also specifically binds to its receptor SecA. The chain is Protein-export protein SecB from Rickettsia africae (strain ESF-5).